The primary structure comprises 100 residues: Pregnancy-associated protein bPAP (100 aa).

The interval 1-40 (DSELAGPRGARGPHGLSGPHGLSGLXGPXGYTGPIGMXGL) is disordered. The segment covering 13–29 (PHGLSGPHGLSGLXGPX) has biased composition (low complexity).

Detected at high levels in the urine of pregnant females (at protein level) and at far lower levels in the urine of nonpregnant females.

This is Pregnancy-associated protein bPAP from Bos taurus (Bovine).